Here is a 341-residue protein sequence, read N- to C-terminus: Tubulin-specific chaperone C (341 aa).

The residue at position 1 (Met-1) is an N-acetylmethionine. The span at Glu-34–Gln-49 shows a compositional bias: basic and acidic residues. The tract at residues Glu-34 to Lys-55 is disordered. A Phosphoserine modification is found at Ser-79. A disordered region spans residues Thr-148–Pro-173. Residues Pro-163–Trp-318 form the C-CAP/cofactor C-like domain.

Belongs to the TBCC family. As to quaternary structure, supercomplex made of cofactors A to E. Cofactors A and D function by capturing and stabilizing tubulin in a quasi-native conformation. Cofactor E binds to the cofactor D-tubulin complex; interaction with cofactor C then causes the release of tubulin polypeptides that are committed to the native state.

Its subcellular location is the cytoplasm. Tubulin-folding protein; involved in the final step of the tubulin folding pathway. The polypeptide is Tubulin-specific chaperone C (Tbcc) (Mus musculus (Mouse)).